Reading from the N-terminus, the 87-residue chain is U3-theraphotoxin-Hhn1h (87 aa).

An N-terminal signal peptide occupies residues 1–24 (MVNMKASMFLTFAGLVLLFVVCYA). Residues 25-52 (SESEEKEFPKEMLSSIFAVDNDSKQEER) constitute a propeptide that is removed on maturation. 3 disulfide bridges follow: cysteine 54–cysteine 67, cysteine 61–cysteine 72, and cysteine 66–cysteine 79.

The protein belongs to the neurotoxin 10 (Hwtx-1) family. 51 (Hntx-8) subfamily. Hntx-8 sub-subfamily. In terms of tissue distribution, expressed by the venom gland.

It is found in the secreted. In terms of biological role, ion channel inhibitor. The protein is U3-theraphotoxin-Hhn1h of Cyriopagopus hainanus (Chinese bird spider).